The sequence spans 95 residues: Aspartyl/glutamyl-tRNA(Asn/Gln) amidotransferase subunit C (95 aa).

The protein belongs to the GatC family. As to quaternary structure, heterotrimer of A, B and C subunits.

The catalysed reaction is L-glutamyl-tRNA(Gln) + L-glutamine + ATP + H2O = L-glutaminyl-tRNA(Gln) + L-glutamate + ADP + phosphate + H(+). The enzyme catalyses L-aspartyl-tRNA(Asn) + L-glutamine + ATP + H2O = L-asparaginyl-tRNA(Asn) + L-glutamate + ADP + phosphate + 2 H(+). Allows the formation of correctly charged Asn-tRNA(Asn) or Gln-tRNA(Gln) through the transamidation of misacylated Asp-tRNA(Asn) or Glu-tRNA(Gln) in organisms which lack either or both of asparaginyl-tRNA or glutaminyl-tRNA synthetases. The reaction takes place in the presence of glutamine and ATP through an activated phospho-Asp-tRNA(Asn) or phospho-Glu-tRNA(Gln). The polypeptide is Aspartyl/glutamyl-tRNA(Asn/Gln) amidotransferase subunit C (Dechloromonas aromatica (strain RCB)).